Here is a 100-residue protein sequence, read N- to C-terminus: Glyceraldehyde-3-phosphate dehydrogenase, testis-specific (100 aa).

D39 and T64 together coordinate NAD(+). Position 89 (R89) interacts with D-glyceraldehyde 3-phosphate.

It belongs to the glyceraldehyde-3-phosphate dehydrogenase family. As to quaternary structure, homotetramer.

It is found in the cytoplasm. The catalysed reaction is D-glyceraldehyde 3-phosphate + phosphate + NAD(+) = (2R)-3-phospho-glyceroyl phosphate + NADH + H(+). Its pathway is carbohydrate degradation; glycolysis; pyruvate from D-glyceraldehyde 3-phosphate: step 1/5. May play an important role in regulating the switch between different pathways for energy production during spermiogenesis and in the spermatozoon. Required for sperm motility and male fertility. In Mesocricetus auratus (Golden hamster), this protein is Glyceraldehyde-3-phosphate dehydrogenase, testis-specific.